The chain runs to 668 residues: Penicillin-binding protein 3 (668 aa).

A helical membrane pass occupies residues 7–23 (LLVFLCVGLIGLIGCSK). Catalysis depends on Ser410, which acts as the Acyl-ester intermediate.

Belongs to the transpeptidase family.

The protein localises to the cell membrane. It is found in the forespore inner membrane. The protein resides in the forespore outer membrane. Its subcellular location is the membrane raft. The enzyme catalyses Preferential cleavage: (Ac)2-L-Lys-D-Ala-|-D-Ala. Also transpeptidation of peptidyl-alanyl moieties that are N-acyl substituents of D-alanine.. It functions in the pathway cell wall biogenesis; peptidoglycan biosynthesis. Its function is as follows. Penicillin-binding proteins (PBPs) function in the late steps of murein biosynthesis. Probably required for both cortical and vegetative peptidoglycan synthesis. Although not usually required for cell division, in the absence of PBP 2B (pbpB) it becomes essential. Confers resistance to oxacillin and cephalexin. This is Penicillin-binding protein 3 from Bacillus subtilis (strain 168).